Here is a 261-residue protein sequence, read N- to C-terminus: 5'-nucleotidase SurE (261 aa).

4 residues coordinate a divalent metal cation: Asp12, Asp13, Ser43, and Asn100.

It belongs to the SurE nucleotidase family. A divalent metal cation serves as cofactor.

The protein localises to the cytoplasm. It carries out the reaction a ribonucleoside 5'-phosphate + H2O = a ribonucleoside + phosphate. Functionally, nucleotidase that shows phosphatase activity on nucleoside 5'-monophosphates. This is 5'-nucleotidase SurE from Protochlamydia amoebophila (strain UWE25).